Here is a 127-residue protein sequence, read N- to C-terminus: Small ribosomal subunit protein eS8 (127 aa).

Positions 1 to 31 (MTIFQGKSGKKATGGSLKQSRKKRRFELGRE) are disordered.

The protein belongs to the eukaryotic ribosomal protein eS8 family. In terms of assembly, part of the 30S ribosomal subunit.

This Thermoplasma acidophilum (strain ATCC 25905 / DSM 1728 / JCM 9062 / NBRC 15155 / AMRC-C165) protein is Small ribosomal subunit protein eS8 (rps8e).